A 1239-amino-acid polypeptide reads, in one-letter code: DNA topoisomerase 2 (1239 aa).

Residues N65, N96, 124 to 126, 137 to 144, and 354 to 356 each bind ATP; these read SSN, GRHGYGAK, and QSK. The 115-residue stretch at 434-548 folds into the Toprim domain; it reads RTLIVTEGDS…SLLQHNPGYI (115 aa). Residues E440, D517, and D519 each contribute to the Mg(2+) site. The 417-residue stretch at 685 to 1101 folds into the Topo IIA-type catalytic domain; the sequence is IPHCVDGLKP…TPVKMWLTDL (417 aa). Residue Y775 is the O-(5'-phospho-DNA)-tyrosine intermediate of the active site. The interval 956 to 965 is interaction with DNA; that stretch reads ALSQRIYING. Residues 1167–1206 form a disordered region; it reads PASKRKPEDTYGGALSSGGSTRNVGKRLTGARGAKKKKVV.

The protein belongs to the type II topoisomerase family. As to quaternary structure, homodimer. Requires Mg(2+) as cofactor. Mn(2+) is required as a cofactor. The cofactor is Ca(2+).

Its subcellular location is the nucleus. The protein resides in the mitochondrion matrix. It localises to the kinetoplast. It carries out the reaction ATP-dependent breakage, passage and rejoining of double-stranded DNA.. Control of topological states of DNA by transient breakage and subsequent rejoining of DNA strands. Topoisomerase II makes double-strand breaks. In Crithidia fasciculata, this protein is DNA topoisomerase 2 (TOP2).